Here is a 224-residue protein sequence, read N- to C-terminus: COMM domain-containing protein 5 (224 aa).

Residues 1-24 form a disordered region; sequence MSALGAPAPYLHHPTDSHSGRVSF. Position 2 is an N-acetylserine (S2). The 65-residue stretch at 151-215 folds into the COMM domain; that stretch reads RVSNFRWRVD…LVLKEMAELE (65 aa).

The protein belongs to the COMM domain-containing protein 5 family. In terms of assembly, component of the commander complex consisting of the CCC subcomplex and the retriever subcomplex. Component of the CCC (COMMD/CCDC22/CCDC93) subcomplex consisting of COMMD1, COMMD2, COMMD3, COMMD4, COMMD5, COMMD6, COMMD7, COMMD8, COMMD9, COMMD10, CCDC22 and CCDC93; within the complex forms a heterodimer with COMMD10. Interacts (via COMM domain) with COMMD1 (via COMM domain). Interacts with RELA, RELB, NFKB1/p105. Interacts with CCDC22, CCDC93, SCNN1B, CUL2, CUL3, CUL4A, CUL4B, CUL7.

The protein resides in the nucleus. It localises to the cytoplasm. In terms of biological role, scaffold protein in the commander complex that is essential for endosomal recycling of transmembrane cargos; the commander complex is composed of the CCC subcomplex and the retriever subcomplex. May modulate activity of cullin-RING E3 ubiquitin ligase (CRL) complexes. Negatively regulates cell proliferation. Negatively regulates cell cycle G2/M phase transition probably by transactivating p21/CDKN1A through the p53/TP53-independent signaling pathway. Involved in kidney proximal tubule morphogenesis. Down-regulates activation of NF-kappa-B. The chain is COMM domain-containing protein 5 (Commd5) from Mus musculus (Mouse).